A 631-amino-acid polypeptide reads, in one-letter code: tRNA uridine 5-carboxymethylaminomethyl modification enzyme MnmG (631 aa).

FAD-binding positions include 13-18 (GGGHAG), valine 125, and serine 180. 273–287 (GPRYCPSIEDKVMRF) contacts NAD(+). Glutamine 370 serves as a coordination point for FAD.

It belongs to the MnmG family. In terms of assembly, homodimer. Heterotetramer of two MnmE and two MnmG subunits. The cofactor is FAD.

The protein resides in the cytoplasm. Functionally, NAD-binding protein involved in the addition of a carboxymethylaminomethyl (cmnm) group at the wobble position (U34) of certain tRNAs, forming tRNA-cmnm(5)s(2)U34. This is tRNA uridine 5-carboxymethylaminomethyl modification enzyme MnmG from Vibrio parahaemolyticus serotype O3:K6 (strain RIMD 2210633).